A 314-amino-acid chain; its full sequence is MTDSSATRPPRLPRRDVHGVLLLDKPLGLSSNDALVRAKRLLRANKAGHTGTLDPLATGLLPLCFGEATKFSQDLLDADKTYEAKVRLGATTTTGDAEGEIVVERLVTCDHDALDAAVARFTGEIEQVPPMYSALKKDGKPLYEYARAGQTVERAARQVTIHAITLLDVDLPAAMFTMRVTCSKGTYIRTLAEDVGEALGCGAHLIGLRRTAVGDLTLEGAVTLEQIDAQADEARPGMLAPVDALLQRCPPVHLDAAAMGRFLQGQRIARRDLPEGQVPPDEGTLARVYGDEGRLLGVARMKEGALRPERLVKL.

The active-site Nucleophile is the Asp54.

This sequence belongs to the pseudouridine synthase TruB family. Type 1 subfamily.

It catalyses the reaction uridine(55) in tRNA = pseudouridine(55) in tRNA. Functionally, responsible for synthesis of pseudouridine from uracil-55 in the psi GC loop of transfer RNAs. The chain is tRNA pseudouridine synthase B from Cupriavidus metallidurans (strain ATCC 43123 / DSM 2839 / NBRC 102507 / CH34) (Ralstonia metallidurans).